The chain runs to 218 residues: Outer-membrane lipoprotein LolB (218 aa).

The signal sequence occupies residues 1–20 (MSQVIRTLALTGLALAGLSG). Cys21 is lipidated: N-palmitoyl cysteine. Residue Cys21 is the site of S-diacylglycerol cysteine attachment.

The protein belongs to the LolB family. In terms of assembly, monomer.

The protein resides in the cell outer membrane. Its function is as follows. Plays a critical role in the incorporation of lipoproteins in the outer membrane after they are released by the LolA protein. This is Outer-membrane lipoprotein LolB from Xanthomonas campestris pv. campestris (strain 8004).